The sequence spans 27 residues: MQLFHLCLIIFCSCPTVQASKLCLGWL.

In Homo sapiens (Human), this protein is Truncated HBeAg protein (C).